The following is a 345-amino-acid chain: Uroporphyrinogen decarboxylase (345 aa).

Substrate contacts are provided by residues 24–28 (RQAGR), D74, Y150, S205, and H318.

This sequence belongs to the uroporphyrinogen decarboxylase family. As to quaternary structure, homodimer.

The protein localises to the cytoplasm. The catalysed reaction is uroporphyrinogen III + 4 H(+) = coproporphyrinogen III + 4 CO2. Its pathway is porphyrin-containing compound metabolism; protoporphyrin-IX biosynthesis; coproporphyrinogen-III from 5-aminolevulinate: step 4/4. In terms of biological role, catalyzes the decarboxylation of four acetate groups of uroporphyrinogen-III to yield coproporphyrinogen-III. The protein is Uroporphyrinogen decarboxylase of Dichelobacter nodosus (strain VCS1703A).